The primary structure comprises 322 residues: GDSL esterase/lipase At5g03600 (322 aa).

Residue S21 is the Nucleophile of the active site. Catalysis depends on residues D295 and H298.

The protein belongs to the 'GDSL' lipolytic enzyme family.

The chain is GDSL esterase/lipase At5g03600 from Arabidopsis thaliana (Mouse-ear cress).